Reading from the N-terminus, the 550-residue chain is tRNA modification GTPase MnmE (550 aa).

(6S)-5-formyl-5,6,7,8-tetrahydrofolate contacts are provided by Arg-20, Glu-78, and Arg-116. The region spanning Gly-212–Ser-478 is the TrmE-type G domain. Asn-222 is a K(+) binding site. Residues Asn-222 to Thr-227, Thr-241 to Thr-247, and Asp-266 to Gly-269 each bind GTP. Ser-226 provides a ligand contact to Mg(2+). Residues Thr-241, Ile-243, and Thr-246 each coordinate K(+). Thr-247 contacts Mg(2+). Lys-550 is a (6S)-5-formyl-5,6,7,8-tetrahydrofolate binding site.

Belongs to the TRAFAC class TrmE-Era-EngA-EngB-Septin-like GTPase superfamily. TrmE GTPase family. In terms of assembly, homodimer. Heterotetramer of two MnmE and two MnmG subunits. K(+) serves as cofactor.

Its subcellular location is the cytoplasm. In terms of biological role, exhibits a very high intrinsic GTPase hydrolysis rate. Involved in the addition of a carboxymethylaminomethyl (cmnm) group at the wobble position (U34) of certain tRNAs, forming tRNA-cmnm(5)s(2)U34. In Neorickettsia sennetsu (strain ATCC VR-367 / Miyayama) (Ehrlichia sennetsu), this protein is tRNA modification GTPase MnmE.